The sequence spans 425 residues: Ribosomal protein uS12 methylthiotransferase RimO (425 aa).

Residues 2–115 (KNFTVITLGC…IIDYIKQFSK (114 aa)) form the MTTase N-terminal domain. [4Fe-4S] cluster-binding residues include Cys-11, Cys-47, Cys-78, Cys-142, Cys-146, and Cys-149. The 230-residue stretch at 128-357 (VEPPSYRYIK…MARQAVISLE (230 aa)) folds into the Radical SAM core domain. In terms of domain architecture, TRAM spans 360-425 (RALIGKKYEA…YEYDVKGVIV (66 aa)).

It belongs to the methylthiotransferase family. RimO subfamily. Requires [4Fe-4S] cluster as cofactor.

The protein resides in the cytoplasm. It carries out the reaction L-aspartate(89)-[ribosomal protein uS12]-hydrogen + (sulfur carrier)-SH + AH2 + 2 S-adenosyl-L-methionine = 3-methylsulfanyl-L-aspartate(89)-[ribosomal protein uS12]-hydrogen + (sulfur carrier)-H + 5'-deoxyadenosine + L-methionine + A + S-adenosyl-L-homocysteine + 2 H(+). Its function is as follows. Catalyzes the methylthiolation of an aspartic acid residue of ribosomal protein uS12. The protein is Ribosomal protein uS12 methylthiotransferase RimO of Thermodesulfovibrio yellowstonii (strain ATCC 51303 / DSM 11347 / YP87).